We begin with the raw amino-acid sequence, 732 residues long: Sesterbrasiliatriene synthase PbSS (732 aa).

The segment at 1–342 is terpene cyclase; that stretch reads MDFLSGAFHY…SRYHRDDLIT (342 aa). Residues D105 and D109 each contribute to the Mg(2+) site. Substrate is bound by residues D105, D109, 193–196, 242–246, and 334–335; these read RLSE, FNKEF, and RY. The DDXXD 1 motif lies at 105-109; it reads DDVTD. Residues 238–246 carry the NSE/DTE motif; it reads DYYSFNKEF. Residues 343-732 form a prenyltransferase region; it reads TAGDRAMIVG…ARILLLGLGL (390 aa). Disordered regions lie at residues 371–390 and 398–420; these read KSAT…WSDS and ACYT…HKAN. The segment covering 411 to 420 has biased composition (basic and acidic residues); the sequence is NGTEAGHKAN. Residues K453, R456, and H485 each contribute to the isopentenyl diphosphate site. Residues D492 and D496 each coordinate Mg(2+). The DDXXD 2 motif lies at 492–496; sequence DDIED. Residue R501 coordinates dimethylallyl diphosphate. R502 serves as a coordination point for isopentenyl diphosphate. Dimethylallyl diphosphate contacts are provided by K579, T580, Q615, N622, K632, and K642.

In the N-terminal section; belongs to the terpene synthase family. The protein in the C-terminal section; belongs to the FPP/GGPP synthase family. In terms of assembly, hexamer. Requires Mg(2+) as cofactor.

The enzyme catalyses isopentenyl diphosphate + (2E,6E)-farnesyl diphosphate = (2E,6E,10E)-geranylgeranyl diphosphate + diphosphate. It carries out the reaction isopentenyl diphosphate + (2E,6E,10E)-geranylgeranyl diphosphate = (2E,6E,10E,14E)-geranylfarnesyl diphosphate + diphosphate. The protein operates within secondary metabolite biosynthesis; terpenoid biosynthesis. Functionally, bifunctional sesterterpene synthase that possesses both prenyl transferase and terpene cyclase activity, converting isopentenyl diphosphate and dimethylallyl diphosphate into geranylfarnesyl diphosphate (GFPP) and further converting GFPP into sesterbrasiliatriene. The polypeptide is Sesterbrasiliatriene synthase PbSS (PbSS) (Penicillium brasilianum).